The sequence spans 30 residues: Methanobactin mb-OB3b (30 aa).

Residues 1–19 (MTVKIAQKKVLPVIGRAAA) constitute a propeptide that is removed on maturation. Residues 20–21 (LC) constitute a cross-link (2-(3-methylbutanoyl)-5-hydroxyoxazole-4-carbothionic acid (Leu-Cys)). Positions 21 and 27 each coordinate Cu(2+). An intrachain disulfide couples cysteine 24 to cysteine 29. The segment at residues 26–27 (PC) is a cross-link (proline 5-hydroxy-oxazole-4-carbothionic acid (Pro-Cys)).

In terms of assembly, monomer. In the absence of copper, may exist as a dimer or an oligomer.

It is found in the secreted. The protein localises to the cytoplasm. It carries out the reaction 2 superoxide + 2 H(+) = H2O2 + O2. In terms of biological role, chalkophore involved in scavenging, uptake and suppression of toxicity of copper. Each apo-methanobactin (apo-mb) complexes 1 Cu(2+) or Cu(1+) ion to form Cu(1+)-mb (Cu-mb) which is then taken up by the cell. Enhances growth rate in the presence of copper and reduces growth lag upon exposition to elevated levels of copper. Cu-mb contributes to the switchover from soluble methane monooxygenase (sMMO) to the membrane-bound particulate MMO (pMMO) by inducing transcription of pMMO subunit A. It also stimulates the enzymatic activity of pMMO. In the absence of copper, binds other metal ions, like Zn(2+), Ag(1+), Au(3+), Co(2+), Cd(2+), Fe(3+), Hg(2+), Mn(2+), Ni(2+), Pb(2+) or U(6+), but not Ba(2+), Ca(2+), La(2+), Mg(2+) or Sr(2+). Uptake is an active process, which may involve TonB-dependent transporters, and as such does not involve porins. Cu-Mb can be taken up by other methanotrophic bacteria but not by E.coli. Has Cu-dependent superoxide dismutase-like activity. Shows reductant-dependent oxidase and hydrogen peroxide reductase activities. Reduces copper-levels in liver in a rat model of Wilson disease. The protein is Methanobactin mb-OB3b of Methylosinus trichosporium.